We begin with the raw amino-acid sequence, 88 residues long: Small ribosomal subunit protein bS16 (88 aa).

The protein belongs to the bacterial ribosomal protein bS16 family.

This Leptospira borgpetersenii serovar Hardjo-bovis (strain L550) protein is Small ribosomal subunit protein bS16.